The primary structure comprises 164 residues: uncharacterized protein (164 aa).

The first 18 residues, 1 to 18, serve as a signal peptide directing secretion; the sequence is MILILTIIVGFLIYFVTA. Asparagine 88 is a glycosylation site (N-linked (GlcNAc...) asparagine; by host).

It belongs to the IIV-6 357R family.

This is an uncharacterized protein from Acheta domesticus (House cricket).